Here is a 318-residue protein sequence, read N- to C-terminus: Acetyl-coenzyme A carboxylase carboxyl transferase subunit alpha (318 aa).

Residues 38 to 292 (ALDRKAEEML…GEAIAAMLGE (255 aa)) form the CoA carboxyltransferase C-terminal domain.

The protein belongs to the AccA family. Acetyl-CoA carboxylase is a heterohexamer composed of biotin carboxyl carrier protein (AccB), biotin carboxylase (AccC) and two subunits each of ACCase subunit alpha (AccA) and ACCase subunit beta (AccD).

Its subcellular location is the cytoplasm. It catalyses the reaction N(6)-carboxybiotinyl-L-lysyl-[protein] + acetyl-CoA = N(6)-biotinyl-L-lysyl-[protein] + malonyl-CoA. The protein operates within lipid metabolism; malonyl-CoA biosynthesis; malonyl-CoA from acetyl-CoA: step 1/1. Its function is as follows. Component of the acetyl coenzyme A carboxylase (ACC) complex. First, biotin carboxylase catalyzes the carboxylation of biotin on its carrier protein (BCCP) and then the CO(2) group is transferred by the carboxyltransferase to acetyl-CoA to form malonyl-CoA. This is Acetyl-coenzyme A carboxylase carboxyl transferase subunit alpha from Paracoccus denitrificans (strain Pd 1222).